The primary structure comprises 173 residues: Putative metal-dependent hydrolase OB0413 (173 aa).

Zn(2+) is bound by residues H64, H155, and H159.

This sequence belongs to the metal hydrolase YfiT family. In terms of assembly, homodimer. Zn(2+) is required as a cofactor.

The protein localises to the cytoplasm. Possible metal-dependent hydrolase. The polypeptide is Putative metal-dependent hydrolase OB0413 (Oceanobacillus iheyensis (strain DSM 14371 / CIP 107618 / JCM 11309 / KCTC 3954 / HTE831)).